A 52-amino-acid chain; its full sequence is Conotoxin Cal9.2c (52 aa).

Positions 1–6 are excised as a propeptide; it reads KKGVTL. Intrachain disulfides connect Cys14–Cys31, Cys19–Cys41, and Cys21–Cys46.

In terms of tissue distribution, expressed by the venom duct.

The protein resides in the secreted. Functionally, probable neurotoxin with unknown target. Possibly targets ion channels. This Californiconus californicus (California cone) protein is Conotoxin Cal9.2c.